A 78-amino-acid polypeptide reads, in one-letter code: Large ribosomal subunit protein bL28 (78 aa).

A disordered region spans residues 1-30 (MAAHCQVTGAGPGFGHSISHSHRRTKRRFD).

The protein belongs to the bacterial ribosomal protein bL28 family.

This is Large ribosomal subunit protein bL28 from Micrococcus luteus (strain ATCC 4698 / DSM 20030 / JCM 1464 / CCM 169 / CCUG 5858 / IAM 1056 / NBRC 3333 / NCIMB 9278 / NCTC 2665 / VKM Ac-2230) (Micrococcus lysodeikticus).